The following is a 90-amino-acid chain: DNA-directed RNA polymerase subunit omega (90 aa).

The protein belongs to the RNA polymerase subunit omega family. As to quaternary structure, the RNAP catalytic core consists of 2 alpha, 1 beta, 1 beta' and 1 omega subunit. When a sigma factor is associated with the core the holoenzyme is formed, which can initiate transcription.

It carries out the reaction RNA(n) + a ribonucleoside 5'-triphosphate = RNA(n+1) + diphosphate. Promotes RNA polymerase assembly. Latches the N- and C-terminal regions of the beta' subunit thereby facilitating its interaction with the beta and alpha subunits. In Histophilus somni (strain 129Pt) (Haemophilus somnus), this protein is DNA-directed RNA polymerase subunit omega.